The chain runs to 230 residues: Ribosomal RNA small subunit methyltransferase Nep1 (230 aa).

S-adenosyl-L-methionine is bound by residues glycine 184, glycine 189, and 205–210; that span reads IYNKPL.

The protein belongs to the class IV-like SAM-binding methyltransferase superfamily. RNA methyltransferase NEP1 family. As to quaternary structure, homodimer.

It carries out the reaction a pseudouridine in rRNA + S-adenosyl-L-methionine = an N(1)-methylpseudouridine in rRNA + S-adenosyl-L-homocysteine + H(+). Functionally, methyltransferase involved in ribosomal biogenesis. Specifically catalyzes the N1-methylation of the pseudouridine corresponding to position 914 in M.jannaschii 16S rRNA. This is Ribosomal RNA small subunit methyltransferase Nep1 from Staphylothermus marinus (strain ATCC 43588 / DSM 3639 / JCM 9404 / F1).